An 83-amino-acid polypeptide reads, in one-letter code: Mu-theraphotoxin-Hhn2g (83 aa).

The N-terminal stretch at Met-1–Ala-21 is a signal peptide. The propeptide occupies Ser-22 to Arg-48. Intrachain disulfides connect Cys-50–Cys-65 and Cys-57–Cys-70. At Leu-81 the chain carries Leucine amide.

This sequence belongs to the neurotoxin 10 (Hwtx-1) family. 15 (Hntx-3) subfamily. Monomer. Expressed by the venom gland.

It is found in the secreted. Functionally, lethal neurotoxin. Selectively blocks tetrodotoxin-sensitive voltage-gated sodium channels (Nav). Does not affect tetrodotoxin-resistant voltage-gated sodium channels or calcium channels. The sequence is that of Mu-theraphotoxin-Hhn2g from Cyriopagopus hainanus (Chinese bird spider).